A 466-amino-acid chain; its full sequence is F-box only protein 15 (466 aa).

The F-box domain occupies 27–73 (SASLDSLPSEVLLKILSYLDAAALLCAGCVNRRFYHLANDNFIWIRI).

As to quaternary structure, directly interacts with SKP1 and CUL1.

Substrate-recognition component of the SCF (SKP1-CUL1-F-box protein)-type E3 ubiquitin ligase complex. In Bos taurus (Bovine), this protein is F-box only protein 15 (FBXO15).